The sequence spans 270 residues: MAPIFKSLALVSALFAAISSAAPVNLDKREVDVVWTTVTTVVWTTIDVTTTIYPTPQAPTPPVVESTPTPTPSAAPEQAEPIETSTQPETTKSQPTQPSVATFIPVAAAAAAADSAAPIPEEPAPQPATTAAPSTSTTTQAAPSAPPAANSGSTEKAASSGYSGPCSKGSPCVGQLTYYDTATSASAPSSCGLTNDGFSENVVALPVGIMTDADCGKTVTITYNGITKTATVVDKCMGCKPTDLDASRHLFGELADFSAGRIDGMSWYFN.

An N-terminal signal peptide occupies residues 1–21; it reads MAPIFKSLALVSALFAAISSA. 2 disordered regions span residues 53-97 and 113-167; these read YPTP…QPTQ and ADSA…GPCS. Residues 63 to 81 are compositionally biased toward low complexity; sequence VVESTPTPTPSAAPEQAEP. Over residues 83–97 the composition is skewed to polar residues; it reads ETSTQPETTKSQPTQ. The segment covering 127 to 149 has biased composition (low complexity); sequence PATTAAPSTSTTTQAAPSAPPAA. Positions 150-162 are enriched in polar residues; sequence NSGSTEKAASSGY.

This chain is Allergen Asp f 7, found in Aspergillus fumigatus (strain ATCC MYA-4609 / CBS 101355 / FGSC A1100 / Af293) (Neosartorya fumigata).